A 483-amino-acid polypeptide reads, in one-letter code: Ribulose bisphosphate carboxylase large chain (483 aa).

The propeptide occupies 1–2 (MS). Residues N123 and T173 each contribute to the substrate site. The active-site Proton acceptor is K175. Position 177 (K177) interacts with substrate. Residues K201, D203, and E204 each contribute to the Mg(2+) site. K201 carries the N6-carboxylysine modification. S208 carries the post-translational modification Phosphoserine. H294 acts as the Proton acceptor in catalysis. Substrate contacts are provided by R295 and H327. Phosphothreonine is present on T330. S379 lines the substrate pocket.

Belongs to the RuBisCO large chain family. Type I subfamily. In terms of assembly, heterohexadecamer of 8 large chains and 8 small chains; disulfide-linked. The disulfide link is formed within the large subunit homodimers. Mg(2+) is required as a cofactor. In terms of processing, the disulfide bond which can form in the large chain dimeric partners within the hexadecamer appears to be associated with oxidative stress and protein turnover.

It localises to the plastid. The protein localises to the chloroplast. The enzyme catalyses 2 (2R)-3-phosphoglycerate + 2 H(+) = D-ribulose 1,5-bisphosphate + CO2 + H2O. It catalyses the reaction D-ribulose 1,5-bisphosphate + O2 = 2-phosphoglycolate + (2R)-3-phosphoglycerate + 2 H(+). In terms of biological role, ruBisCO catalyzes two reactions: the carboxylation of D-ribulose 1,5-bisphosphate, the primary event in carbon dioxide fixation, as well as the oxidative fragmentation of the pentose substrate in the photorespiration process. Both reactions occur simultaneously and in competition at the same active site. The sequence is that of Ribulose bisphosphate carboxylase large chain from Aethionema cordifolium (Lebanon stonecress).